Here is a 273-residue protein sequence, read N- to C-terminus: 5-deoxy-glucuronate isomerase (273 aa).

It belongs to the isomerase IolB family.

The catalysed reaction is 5-deoxy-D-glucuronate = 5-dehydro-2-deoxy-D-gluconate. It functions in the pathway polyol metabolism; myo-inositol degradation into acetyl-CoA; acetyl-CoA from myo-inositol: step 4/7. In terms of biological role, involved in the isomerization of 5-deoxy-glucuronate (5DG) to 5-dehydro-2-deoxy-D-gluconate (DKG or 2-deoxy-5-keto-D-gluconate). The polypeptide is 5-deoxy-glucuronate isomerase (Listeria monocytogenes serotype 4b (strain CLIP80459)).